The following is a 244-amino-acid chain: 7-cyano-7-deazaguanine synthase (244 aa).

14–24 (FSGGQDSATCL) contacts ATP. Positions 202, 217, 220, and 223 each coordinate Zn(2+).

It belongs to the QueC family. It depends on Zn(2+) as a cofactor.

It catalyses the reaction 7-carboxy-7-deazaguanine + NH4(+) + ATP = 7-cyano-7-deazaguanine + ADP + phosphate + H2O + H(+). It functions in the pathway purine metabolism; 7-cyano-7-deazaguanine biosynthesis. In terms of biological role, catalyzes the ATP-dependent conversion of 7-carboxy-7-deazaguanine (CDG) to 7-cyano-7-deazaguanine (preQ(0)). This is 7-cyano-7-deazaguanine synthase from Paraburkholderia phytofirmans (strain DSM 17436 / LMG 22146 / PsJN) (Burkholderia phytofirmans).